We begin with the raw amino-acid sequence, 342 residues long: N-acetyl-gamma-glutamyl-phosphate reductase (342 aa).

Residue Cys149 is part of the active site.

The protein belongs to the NAGSA dehydrogenase family. Type 1 subfamily.

Its subcellular location is the cytoplasm. The catalysed reaction is N-acetyl-L-glutamate 5-semialdehyde + phosphate + NADP(+) = N-acetyl-L-glutamyl 5-phosphate + NADPH + H(+). The protein operates within amino-acid biosynthesis; L-arginine biosynthesis; N(2)-acetyl-L-ornithine from L-glutamate: step 3/4. Catalyzes the NADPH-dependent reduction of N-acetyl-5-glutamyl phosphate to yield N-acetyl-L-glutamate 5-semialdehyde. The chain is N-acetyl-gamma-glutamyl-phosphate reductase from Cereibacter sphaeroides (strain KD131 / KCTC 12085) (Rhodobacter sphaeroides).